We begin with the raw amino-acid sequence, 259 residues long: UPF0246 protein PSPPH_1119 (259 aa).

It belongs to the UPF0246 family.

This Pseudomonas savastanoi pv. phaseolicola (strain 1448A / Race 6) (Pseudomonas syringae pv. phaseolicola (strain 1448A / Race 6)) protein is UPF0246 protein PSPPH_1119.